A 435-amino-acid chain; its full sequence is NADH-quinone oxidoreductase subunit D (435 aa).

Belongs to the complex I 49 kDa subunit family. In terms of assembly, NDH-1 is composed of 14 different subunits. Subunits NuoB, C, D, E, F, and G constitute the peripheral sector of the complex.

The protein resides in the cell inner membrane. The catalysed reaction is a quinone + NADH + 5 H(+)(in) = a quinol + NAD(+) + 4 H(+)(out). Its function is as follows. NDH-1 shuttles electrons from NADH, via FMN and iron-sulfur (Fe-S) centers, to quinones in the respiratory chain. The immediate electron acceptor for the enzyme in this species is believed to be ubiquinone. Couples the redox reaction to proton translocation (for every two electrons transferred, four hydrogen ions are translocated across the cytoplasmic membrane), and thus conserves the redox energy in a proton gradient. In Xanthomonas euvesicatoria pv. vesicatoria (strain 85-10) (Xanthomonas campestris pv. vesicatoria), this protein is NADH-quinone oxidoreductase subunit D.